Here is a 402-residue protein sequence, read N- to C-terminus: Imidazolonepropionase (402 aa).

The Fe(3+) site is built by H69 and H71. Positions 69 and 71 each coordinate Zn(2+). 4-imidazolone-5-propanoate-binding residues include R78, Y141, and H174. Y141 serves as a coordination point for N-formimidoyl-L-glutamate. Residue H239 coordinates Fe(3+). H239 contacts Zn(2+). 4-imidazolone-5-propanoate is bound at residue Q242. D314 is a binding site for Fe(3+). Position 314 (D314) interacts with Zn(2+). N-formimidoyl-L-glutamate contacts are provided by N316 and G318. Residue T319 participates in 4-imidazolone-5-propanoate binding.

It belongs to the metallo-dependent hydrolases superfamily. HutI family. Requires Zn(2+) as cofactor. The cofactor is Fe(3+).

Its subcellular location is the cytoplasm. It carries out the reaction 4-imidazolone-5-propanoate + H2O = N-formimidoyl-L-glutamate. It participates in amino-acid degradation; L-histidine degradation into L-glutamate; N-formimidoyl-L-glutamate from L-histidine: step 3/3. Its function is as follows. Catalyzes the hydrolytic cleavage of the carbon-nitrogen bond in imidazolone-5-propanoate to yield N-formimidoyl-L-glutamate. It is the third step in the universal histidine degradation pathway. The polypeptide is Imidazolonepropionase (Maricaulis maris (strain MCS10) (Caulobacter maris)).